Reading from the N-terminus, the 65-residue chain is Large ribosomal subunit protein uL29 (65 aa).

Belongs to the universal ribosomal protein uL29 family.

In Lactobacillus johnsonii (strain CNCM I-12250 / La1 / NCC 533), this protein is Large ribosomal subunit protein uL29.